A 526-amino-acid polypeptide reads, in one-letter code: Cholesterol side-chain cleavage enzyme, mitochondrial (526 aa).

The N-terminal 36 residues, methionine 1–glycine 36, are a transit peptide targeting the mitochondrion. Residues serine 30–serine 41 show a composition bias toward low complexity. The disordered stretch occupies residues serine 30–proline 49. Position 458 (cysteine 458) interacts with heme.

It belongs to the cytochrome P450 family. As to quaternary structure, interacts with FDX1/adrenodoxin. It depends on heme as a cofactor.

It is found in the mitochondrion inner membrane. It carries out the reaction 6 reduced [adrenodoxin] + cholesterol + 3 O2 + 6 H(+) = 4-methylpentanal + pregnenolone + 6 oxidized [adrenodoxin] + 4 H2O. The enzyme catalyses 2 reduced [adrenodoxin] + cholesterol + O2 + 2 H(+) = (22R)-hydroxycholesterol + 2 oxidized [adrenodoxin] + H2O. The catalysed reaction is (22R)-hydroxycholesterol + 2 reduced [adrenodoxin] + O2 + 2 H(+) = (20R,22R)-20,22-dihydroxycholesterol + 2 oxidized [adrenodoxin] + H2O. It catalyses the reaction (20R,22R)-20,22-dihydroxycholesterol + 2 reduced [adrenodoxin] + O2 + 2 H(+) = 4-methylpentanal + pregnenolone + 2 oxidized [adrenodoxin] + 2 H2O. It participates in lipid metabolism; C21-steroid hormone metabolism. Its pathway is steroid metabolism; cholesterol metabolism. In terms of biological role, a cytochrome P450 monooxygenase that catalyzes the side-chain hydroxylation and cleavage of cholesterol to pregnenolone, the precursor of most steroid hormones. Catalyzes three sequential oxidation reactions of cholesterol, namely the hydroxylation at C22 followed with the hydroxylation at C20 to yield 20R,22R-hydroxycholesterol that is further cleaved between C20 and C22 to yield the C21-steroid pregnenolone and 4-methylpentanal. Mechanistically, uses molecular oxygen inserting one oxygen atom into a substrate and reducing the second into a water molecule. Two electrons are provided by NADPH via a two-protein mitochondrial transfer system comprising flavoprotein FDXR (adrenodoxin/ferredoxin reductase) and nonheme iron-sulfur protein FDX1 or FDX2 (adrenodoxin/ferredoxin). The chain is Cholesterol side-chain cleavage enzyme, mitochondrial from Mus musculus (Mouse).